The following is a 68-amino-acid chain: Large ribosomal subunit protein bL35 (68 aa).

Belongs to the bacterial ribosomal protein bL35 family.

In Pelagibacter ubique (strain HTCC1062), this protein is Large ribosomal subunit protein bL35.